The primary structure comprises 96 residues: ATP synthase subunit c (96 aa).

The next 2 membrane-spanning stretches (helical) occupy residues 9–29 (FIAC…GCGI) and 58–78 (IGLA…LILI).

It belongs to the ATPase C chain family. F-type ATPases have 2 components, F(1) - the catalytic core - and F(0) - the membrane proton channel. F(1) has five subunits: alpha(3), beta(3), gamma(1), delta(1), epsilon(1). F(0) has three main subunits: a(1), b(2) and c(10-14). The alpha and beta chains form an alternating ring which encloses part of the gamma chain. F(1) is attached to F(0) by a central stalk formed by the gamma and epsilon chains, while a peripheral stalk is formed by the delta and b chains.

Its subcellular location is the cell inner membrane. In terms of biological role, f(1)F(0) ATP synthase produces ATP from ADP in the presence of a proton or sodium gradient. F-type ATPases consist of two structural domains, F(1) containing the extramembraneous catalytic core and F(0) containing the membrane proton channel, linked together by a central stalk and a peripheral stalk. During catalysis, ATP synthesis in the catalytic domain of F(1) is coupled via a rotary mechanism of the central stalk subunits to proton translocation. Functionally, key component of the F(0) channel; it plays a direct role in translocation across the membrane. A homomeric c-ring of between 10-14 subunits forms the central stalk rotor element with the F(1) delta and epsilon subunits. This chain is ATP synthase subunit c, found in Desulfosudis oleivorans (strain DSM 6200 / JCM 39069 / Hxd3) (Desulfococcus oleovorans).